Reading from the N-terminus, the 901-residue chain is Aconitate hydratase A (901 aa).

Positions 443, 509, and 512 each coordinate [4Fe-4S] cluster.

This sequence belongs to the aconitase/IPM isomerase family. As to quaternary structure, monomer. It depends on [4Fe-4S] cluster as a cofactor.

It catalyses the reaction citrate = D-threo-isocitrate. It carries out the reaction (2S,3R)-3-hydroxybutane-1,2,3-tricarboxylate = 2-methyl-cis-aconitate + H2O. It functions in the pathway carbohydrate metabolism; tricarboxylic acid cycle; isocitrate from oxaloacetate: step 2/2. Its pathway is organic acid metabolism; propanoate degradation. Functionally, involved in the catabolism of short chain fatty acids (SCFA) via the tricarboxylic acid (TCA)(acetyl degradation route) and probably the 2-methylcitrate cycle I (propionate degradation route). Catalyzes the reversible isomerization of citrate to isocitrate via cis-aconitate. Could catalyze the hydration of 2-methyl-cis-aconitate to yield (2R,3S)-2-methylisocitrate. The apo form of AcnA functions as a RNA-binding regulatory protein. In Staphylococcus aureus (strain MRSA252), this protein is Aconitate hydratase A (acnA).